The following is a 133-amino-acid chain: Small ribosomal subunit protein uS11 (133 aa).

It belongs to the universal ribosomal protein uS11 family. As to quaternary structure, part of the 30S ribosomal subunit.

Its function is as follows. Located on the platform of the 30S subunit. The sequence is that of Small ribosomal subunit protein uS11 from Aeropyrum pernix (strain ATCC 700893 / DSM 11879 / JCM 9820 / NBRC 100138 / K1).